The primary structure comprises 142 residues: Transcriptional regulator MraZ (142 aa).

SpoVT-AbrB domains lie at 5 to 47 and 76 to 119; these read EYPY…PLAS and ANKA…NPER.

It belongs to the MraZ family. In terms of assembly, forms oligomers.

The protein localises to the cytoplasm. The protein resides in the nucleoid. This is Transcriptional regulator MraZ from Deinococcus geothermalis (strain DSM 11300 / CIP 105573 / AG-3a).